A 310-amino-acid chain; its full sequence is Nodulation protein D 1 (310 aa).

The HTH lysR-type domain occupies 6-63 (LDLNLLVALDALMTERQLTAAARRINLSQPAMSAAIARLRNYFHDDLFVMQGRELILT). A DNA-binding region (H-T-H motif) is located at residues 23-42 (LTAAARRINLSQPAMSAAIA).

Belongs to the LysR transcriptional regulatory family.

Its function is as follows. NodD regulates the expression of the nodABCFE genes which encode other nodulation proteins. NodD is also a negative regulator of its own expression. Binds flavonoids as inducers. This Neorhizobium galegae (Rhizobium galegae) protein is Nodulation protein D 1 (nodD1).